Consider the following 188-residue polypeptide: GTPase KRas (188 aa).

GTP-binding positions include 10-18 (GAGGVGKSA), 29-35 (VDEYDPT), 59-60 (AG), and 116-119 (NKYD). The Effector region motif lies at 32–40 (YDPTIEDSY). Residues 167 to 188 (KEKMSKEGKKKKKKSKTKCILM) are disordered. Cys-185 bears the Cysteine methyl ester mark. Cys-185 carries the S-farnesyl cysteine lipid modification. A propeptide spans 186-188 (ILM) (removed in mature form).

The protein belongs to the small GTPase superfamily. Ras family.

Its subcellular location is the cell membrane. The protein localises to the cytoplasm. It carries out the reaction GTP + H2O = GDP + phosphate + H(+). With respect to regulation, alternates between an inactive form bound to GDP and an active form bound to GTP. Activated by a guanine nucleotide-exchange factor (GEF) and inactivated by a GTPase-activating protein (GAP). Its function is as follows. Ras proteins bind GDP/GTP and possess intrinsic GTPase activity. Plays an important role in the regulation of cell proliferation. May play a role in promoting oncogenic events by inducing transcriptional silencing of tumor suppressor genes (TSGs). The chain is GTPase KRas (kras) from Kryptolebias marmoratus (Mangrove killifish).